Reading from the N-terminus, the 130-residue chain is Small ribosomal subunit protein uS9 (130 aa).

This sequence belongs to the universal ribosomal protein uS9 family.

The protein is Small ribosomal subunit protein uS9 of Delftia acidovorans (strain DSM 14801 / SPH-1).